The primary structure comprises 612 residues: Chaperone protein DnaK (612 aa).

The residue at position 174 (threonine 174) is a Phosphothreonine; by autocatalysis. The tract at residues 578-612 (GGQTGGATNTDSAGQGTTQDNVYEANYKVEDDDNK) is disordered. Residues 586 to 598 (NTDSAGQGTTQDN) show a composition bias toward polar residues.

Belongs to the heat shock protein 70 family.

Functionally, acts as a chaperone. The protein is Chaperone protein DnaK of Thermoanaerobacter sp. (strain X514).